The chain runs to 324 residues: Quinolinate synthase (324 aa).

Residues H44 and S62 each contribute to the iminosuccinate site. Residue C107 coordinates [4Fe-4S] cluster. Iminosuccinate-binding positions include 133–135 and S150; that span reads YVN. C192 provides a ligand contact to [4Fe-4S] cluster. Iminosuccinate contacts are provided by residues 218–220 and T235; that span reads HPE. C278 lines the [4Fe-4S] cluster pocket.

Belongs to the quinolinate synthase family. Type 2 subfamily. [4Fe-4S] cluster is required as a cofactor.

The protein resides in the cytoplasm. The enzyme catalyses iminosuccinate + dihydroxyacetone phosphate = quinolinate + phosphate + 2 H2O + H(+). It functions in the pathway cofactor biosynthesis; NAD(+) biosynthesis; quinolinate from iminoaspartate: step 1/1. Functionally, catalyzes the condensation of iminoaspartate with dihydroxyacetone phosphate to form quinolinate. The protein is Quinolinate synthase of Leptospira interrogans serogroup Icterohaemorrhagiae serovar copenhageni (strain Fiocruz L1-130).